The primary structure comprises 174 residues: ATP synthase subunit b 2 (174 aa).

Residues 27–47 (IFWLIITLVAIYLILTKVALP) traverse the membrane as a helical segment.

The protein belongs to the ATPase B chain family. F-type ATPases have 2 components, F(1) - the catalytic core - and F(0) - the membrane proton channel. F(1) has five subunits: alpha(3), beta(3), gamma(1), delta(1), epsilon(1). F(0) has three main subunits: a(1), b(2) and c(10-14). The alpha and beta chains form an alternating ring which encloses part of the gamma chain. F(1) is attached to F(0) by a central stalk formed by the gamma and epsilon chains, while a peripheral stalk is formed by the delta and b chains.

It localises to the cell inner membrane. F(1)F(0) ATP synthase produces ATP from ADP in the presence of a proton or sodium gradient. F-type ATPases consist of two structural domains, F(1) containing the extramembraneous catalytic core and F(0) containing the membrane proton channel, linked together by a central stalk and a peripheral stalk. During catalysis, ATP synthesis in the catalytic domain of F(1) is coupled via a rotary mechanism of the central stalk subunits to proton translocation. Functionally, component of the F(0) channel, it forms part of the peripheral stalk, linking F(1) to F(0). The b'-subunit is a diverged and duplicated form of b found in plants and photosynthetic bacteria. This is ATP synthase subunit b 2 (atpF2) from Dinoroseobacter shibae (strain DSM 16493 / NCIMB 14021 / DFL 12).